Reading from the N-terminus, the 131-residue chain is D-ribose pyranase (131 aa).

His20 (proton donor) is an active-site residue. Substrate is bound by residues Asp28, His98, and Tyr120–Asn122.

It belongs to the RbsD / FucU family. RbsD subfamily. Homodecamer.

Its subcellular location is the cytoplasm. It catalyses the reaction beta-D-ribopyranose = beta-D-ribofuranose. It participates in carbohydrate metabolism; D-ribose degradation; D-ribose 5-phosphate from beta-D-ribopyranose: step 1/2. Catalyzes the interconversion of beta-pyran and beta-furan forms of D-ribose. The sequence is that of D-ribose pyranase from Enterococcus faecalis (strain ATCC 700802 / V583).